Reading from the N-terminus, the 343-residue chain is UDP-N-acetylglucosamine--N-acetylmuramyl-(pentapeptide) pyrophosphoryl-undecaprenol N-acetylglucosamine transferase (343 aa).

Residues T10–G12, N113, S174, and Q275 contribute to the UDP-N-acetyl-alpha-D-glucosamine site.

The protein belongs to the glycosyltransferase 28 family. MurG subfamily.

The protein resides in the cell membrane. The enzyme catalyses di-trans,octa-cis-undecaprenyl diphospho-N-acetyl-alpha-D-muramoyl-L-alanyl-D-glutamyl-meso-2,6-diaminopimeloyl-D-alanyl-D-alanine + UDP-N-acetyl-alpha-D-glucosamine = di-trans,octa-cis-undecaprenyl diphospho-[N-acetyl-alpha-D-glucosaminyl-(1-&gt;4)]-N-acetyl-alpha-D-muramoyl-L-alanyl-D-glutamyl-meso-2,6-diaminopimeloyl-D-alanyl-D-alanine + UDP + H(+). It functions in the pathway cell wall biogenesis; peptidoglycan biosynthesis. Its function is as follows. Cell wall formation. Catalyzes the transfer of a GlcNAc subunit on undecaprenyl-pyrophosphoryl-MurNAc-pentapeptide (lipid intermediate I) to form undecaprenyl-pyrophosphoryl-MurNAc-(pentapeptide)GlcNAc (lipid intermediate II). This is UDP-N-acetylglucosamine--N-acetylmuramyl-(pentapeptide) pyrophosphoryl-undecaprenol N-acetylglucosamine transferase from Wolbachia sp. subsp. Brugia malayi (strain TRS).